A 159-amino-acid chain; its full sequence is Eukaryotic translation initiation factor 5A-2 (159 aa).

Basic and acidic residues predominate over residues 1–10 (MSDEEHHFEP). Residues 1 to 21 (MSDEEHHFEPAADAGASKTYP) form a disordered region. Residue lysine 52 is modified to Hypusine.

This sequence belongs to the eIF-5A family. Post-translationally, lys-52 undergoes hypusination, a unique post-translational modification that consists in the addition of a butylamino group from spermidine to lysine side chain, leading to the formation of the unusual amino acid hypusine. eIF-5As are the only known proteins to undergo this modification, which is essential for their function.

Functionally, translation factor that promotes translation elongation and termination, particularly upon ribosome stalling at specific amino acid sequence contexts. Binds between the exit (E) and peptidyl (P) site of the ribosome and promotes rescue of stalled ribosome: specifically required for efficient translation of polyproline-containing peptides as well as other motifs that stall the ribosome. Acts as a ribosome quality control (RQC) cofactor by joining the RQC complex to facilitate peptidyl transfer during CAT tailing step. The protein is Eukaryotic translation initiation factor 5A-2 of Medicago sativa (Alfalfa).